The following is a 233-amino-acid chain: Adenosine 5'-phosphosulfate reductase (233 aa).

[4Fe-4S] cluster contacts are provided by Cys120, Cys121, Cys203, and Cys206. The active-site Nucleophile; cysteine thiosulfonate intermediate is the Cys229.

This sequence belongs to the PAPS reductase family. CysH subfamily. [4Fe-4S] cluster serves as cofactor.

Its subcellular location is the cytoplasm. It carries out the reaction [thioredoxin]-disulfide + sulfite + AMP + 2 H(+) = adenosine 5'-phosphosulfate + [thioredoxin]-dithiol. Its pathway is sulfur metabolism; hydrogen sulfide biosynthesis; sulfite from sulfate. Its function is as follows. Catalyzes the formation of sulfite from adenosine 5'-phosphosulfate (APS) using thioredoxin as an electron donor. This is Adenosine 5'-phosphosulfate reductase from Bacillus velezensis (strain DSM 23117 / BGSC 10A6 / LMG 26770 / FZB42) (Bacillus amyloliquefaciens subsp. plantarum).